Here is a 678-residue protein sequence, read N- to C-terminus: Zinc finger translocation-associated protein (678 aa).

4 disordered regions span residues 1 to 100 (MEPG…PGRD), 174 to 250 (GAGG…GSRG), 333 to 413 (LSEL…RDHR), and 493 to 583 (PESP…NYQP). Positions 66-78 (PSSRARGPASSGR) are enriched in low complexity. Over residues 79 to 88 (KYSDHCEARA) the composition is skewed to basic and acidic residues. Residues 187 to 200 (AEEEEEEDEEEEEG) show a composition bias toward acidic residues. Over residues 205–214 (ACPPKGSGKA) the composition is skewed to low complexity. K375 is covalently cross-linked (Glycyl lysine isopeptide (Lys-Gly) (interchain with G-Cter in SUMO2)). The segment covering 493 to 509 (PESPSVPVAPSTASASE) has biased composition (low complexity). 2 stretches are compositionally biased toward acidic residues: residues 512-524 (GGAEEAEPEEEWW) and 539-549 (AEEEDDEDDSQ). Positions 557–572 (PPLPLPPPPPPPPPPP) are enriched in pro residues. Basic and acidic residues predominate over residues 573–583 (RSREQRRNYQP).

The polypeptide is Zinc finger translocation-associated protein (Mus musculus (Mouse)).